The primary structure comprises 61 residues: UPF0434 protein Pfl01_4174 (61 aa).

Belongs to the UPF0434 family.

The sequence is that of UPF0434 protein Pfl01_4174 from Pseudomonas fluorescens (strain Pf0-1).